Consider the following 468-residue polypeptide: ATP synthase subunit beta (468 aa).

Position 156 to 163 (156 to 163 (GGAGVGKT)) interacts with ATP.

It belongs to the ATPase alpha/beta chains family. F-type ATPases have 2 components, CF(1) - the catalytic core - and CF(0) - the membrane proton channel. CF(1) has five subunits: alpha(3), beta(3), gamma(1), delta(1), epsilon(1). CF(0) has three main subunits: a(1), b(2) and c(9-12). The alpha and beta chains form an alternating ring which encloses part of the gamma chain. CF(1) is attached to CF(0) by a central stalk formed by the gamma and epsilon chains, while a peripheral stalk is formed by the delta and b chains.

The protein localises to the cell inner membrane. It catalyses the reaction ATP + H2O + 4 H(+)(in) = ADP + phosphate + 5 H(+)(out). Functionally, produces ATP from ADP in the presence of a proton gradient across the membrane. The catalytic sites are hosted primarily by the beta subunits. This Sulfurimonas denitrificans (strain ATCC 33889 / DSM 1251) (Thiomicrospira denitrificans (strain ATCC 33889 / DSM 1251)) protein is ATP synthase subunit beta.